The following is a 345-amino-acid chain: Annexin A9 (345 aa).

4 Annexin repeats span residues 41–112 (FSAD…ALLQ), 113–184 (PAAH…ALAK), 197–266 (NLAA…NLAS), and 270–341 (NTPL…ALCR).

The protein belongs to the annexin family. In terms of assembly, homodimer.

May act as a low affinity receptor for acetylcholine. This is Annexin A9 (ANXA9) from Bos taurus (Bovine).